The primary structure comprises 476 residues: Arginine biosynthesis bifunctional protein ArgJ, mitochondrial (476 aa).

Substrate is bound by residues threonine 204, lysine 233, threonine 244, glutamate 331, asparagine 471, and threonine 476. Threonine 244 (nucleophile) is an active-site residue.

The protein belongs to the ArgJ family. In terms of assembly, heterodimer of an alpha and a beta chain. In terms of processing, the alpha and beta chains are autoproteolytically processed from a single precursor protein within the mitochondrion.

Its subcellular location is the mitochondrion matrix. The catalysed reaction is N(2)-acetyl-L-ornithine + L-glutamate = N-acetyl-L-glutamate + L-ornithine. The enzyme catalyses L-glutamate + acetyl-CoA = N-acetyl-L-glutamate + CoA + H(+). It functions in the pathway amino-acid biosynthesis; L-arginine biosynthesis; L-ornithine and N-acetyl-L-glutamate from L-glutamate and N(2)-acetyl-L-ornithine (cyclic): step 1/1. The protein operates within amino-acid biosynthesis; L-arginine biosynthesis; N(2)-acetyl-L-ornithine from L-glutamate: step 1/4. Its function is as follows. Catalyzes two activities which are involved in the cyclic version of arginine biosynthesis: the synthesis of acetylglutamate from glutamate and acetyl-CoA, and of ornithine by transacetylation between acetylornithine and glutamate. In Arthroderma otae (strain ATCC MYA-4605 / CBS 113480) (Microsporum canis), this protein is Arginine biosynthesis bifunctional protein ArgJ, mitochondrial.